A 265-amino-acid polypeptide reads, in one-letter code: Urease accessory protein UreH (265 aa).

The protein belongs to the UreD family. UreH, UreF and UreG form a complex that acts as a GTP-hydrolysis-dependent molecular chaperone, activating the urease apoprotein by helping to assemble the nickel containing metallocenter of UreC. The UreE protein probably delivers the nickel.

Its subcellular location is the cytoplasm. Functionally, required for maturation of urease via the functional incorporation of the urease nickel metallocenter. The protein is Urease accessory protein UreH of Helicobacter pylori (strain P12).